Here is a 232-residue protein sequence, read N- to C-terminus: 7-cyano-7-deazaguanine synthase (232 aa).

13–23 (LSGGLDSATVL) is a binding site for ATP. The Zn(2+) site is built by Cys194, Cys204, Cys207, and Cys210.

The protein belongs to the QueC family. Requires Zn(2+) as cofactor.

The enzyme catalyses 7-carboxy-7-deazaguanine + NH4(+) + ATP = 7-cyano-7-deazaguanine + ADP + phosphate + H2O + H(+). The protein operates within purine metabolism; 7-cyano-7-deazaguanine biosynthesis. Its function is as follows. Catalyzes the ATP-dependent conversion of 7-carboxy-7-deazaguanine (CDG) to 7-cyano-7-deazaguanine (preQ(0)). This is 7-cyano-7-deazaguanine synthase from Hydrogenovibrio crunogenus (strain DSM 25203 / XCL-2) (Thiomicrospira crunogena).